A 298-amino-acid chain; its full sequence is 4-hydroxy-tetrahydrodipicolinate synthase (298 aa).

Thr48 serves as a coordination point for pyruvate. The Proton donor/acceptor role is filled by Tyr137. Lys166 (schiff-base intermediate with substrate) is an active-site residue. A pyruvate-binding site is contributed by Ile207.

This sequence belongs to the DapA family. Homotetramer; dimer of dimers.

Its subcellular location is the cytoplasm. The enzyme catalyses L-aspartate 4-semialdehyde + pyruvate = (2S,4S)-4-hydroxy-2,3,4,5-tetrahydrodipicolinate + H2O + H(+). It functions in the pathway amino-acid biosynthesis; L-lysine biosynthesis via DAP pathway; (S)-tetrahydrodipicolinate from L-aspartate: step 3/4. Catalyzes the condensation of (S)-aspartate-beta-semialdehyde [(S)-ASA] and pyruvate to 4-hydroxy-tetrahydrodipicolinate (HTPA). In Campylobacter lari (strain RM2100 / D67 / ATCC BAA-1060), this protein is 4-hydroxy-tetrahydrodipicolinate synthase.